Reading from the N-terminus, the 831-residue chain is Thymine dioxygenase JBP1-B (831 aa).

Residues Val80–Ala282 are thymine dioxygenase. Fe cation contacts are provided by His207, Asp209, and His257. 2-oxoglutarate is bound at residue Arg273. Residues Leu409–Ala578 form a DNA-binding JBP1 domain region.

It belongs to the TET family. JBP1 subfamily. In terms of assembly, monomer. Binds to DNA as a monomer. Fe(2+) is required as a cofactor.

It is found in the nucleus. The catalysed reaction is thymine + 2-oxoglutarate + O2 = 5-hydroxymethyluracil + succinate + CO2. In terms of biological role, dioxygenase that catalyzes the first step of DNA base J (beta-d-glucosyl-HOMedU) biosynthesis by converting thymine to 5-hydroxymethyluracil (HOMedU). DNA base J is a hypermodified thymidine residue found in the genome of kinetoplastid parasites, which is localized primarily to repetitive DNA, namely the telomeres, and is implicated in the regulation of antigenic variation. Also specifically binds to base J-containing DNA (J-DNA). Involved in propagation and maintenance of DNA base J synthesis initiated by JBP2 by specifically binding already synthesized DNA base J and propagating J synthesis. Thymine dioxygenase activity and J-DNA-binding are independent functions. This Trypanosoma cruzi (strain CL Brener) protein is Thymine dioxygenase JBP1-B (JBP1B).